The sequence spans 859 residues: Chitin synthase 1 (859 aa).

Residues methionine 1–threonine 22 form a disordered region. Helical transmembrane passes span leucine 544–leucine 564, methionine 615–tyrosine 635, phenylalanine 662–isoleucine 682, tyrosine 793–proline 813, and leucine 833–isoleucine 853.

Belongs to the chitin synthase family.

The protein resides in the cell membrane. The enzyme catalyses [(1-&gt;4)-N-acetyl-beta-D-glucosaminyl](n) + UDP-N-acetyl-alpha-D-glucosamine = [(1-&gt;4)-N-acetyl-beta-D-glucosaminyl](n+1) + UDP + H(+). In terms of biological role, polymerizes chitin, a structural polymer of the cell wall and septum, by transferring the sugar moiety of UDP-GlcNAc to the non-reducing end of the growing chitin polymer. The polypeptide is Chitin synthase 1 (chs1) (Schizosaccharomyces pombe (strain 972 / ATCC 24843) (Fission yeast)).